Reading from the N-terminus, the 161-residue chain is Nucleotide-binding protein Bphyt_3208 (161 aa).

Belongs to the YajQ family.

Nucleotide-binding protein. The sequence is that of Nucleotide-binding protein Bphyt_3208 from Paraburkholderia phytofirmans (strain DSM 17436 / LMG 22146 / PsJN) (Burkholderia phytofirmans).